The chain runs to 319 residues: Putative GPI-anchor transamidase (319 aa).

The signal sequence occupies residues 1–16 (MRHVLLIFCAIIATEA). Residues H156 and C198 contribute to the active site. An N-linked (GlcNAc...) asparagine glycan is attached at N257.

It belongs to the peptidase C13 family.

Its pathway is glycolipid biosynthesis; glycosylphosphatidylinositol-anchor biosynthesis. In terms of biological role, mediates GPI anchoring in the endoplasmic reticulum, by replacing a protein's C-terminal GPI attachment signal peptide with a pre-assembled GPI. During this transamidation reaction, the GPI transamidase forms a carbonyl intermediate with the substrate protein. In Caenorhabditis elegans, this protein is Putative GPI-anchor transamidase.